A 347-amino-acid polypeptide reads, in one-letter code: NADH-ubiquinone oxidoreductase chain 2 (347 aa).

The next 10 membrane-spanning stretches (helical) occupy residues 3-23 (PIIY…VMIS), 25-45 (HWLL…PVLM), 59-79 (YFLT…INLL), 89-109 (MFNP…LGLS), 149-169 (INPN…GWGG), 178-198 (IMAY…PYNT), 200-220 (MTIL…MLLI), 237-257 (MPVI…LPPL), 274-294 (ESII…YFYM), and 325-345 (LLPT…ALSS).

Belongs to the complex I subunit 2 family. Core subunit of respiratory chain NADH dehydrogenase (Complex I) which is composed of 45 different subunits. Interacts with TMEM242.

It localises to the mitochondrion inner membrane. The enzyme catalyses a ubiquinone + NADH + 5 H(+)(in) = a ubiquinol + NAD(+) + 4 H(+)(out). Its function is as follows. Core subunit of the mitochondrial membrane respiratory chain NADH dehydrogenase (Complex I) which catalyzes electron transfer from NADH through the respiratory chain, using ubiquinone as an electron acceptor. Essential for the catalytic activity and assembly of complex I. The protein is NADH-ubiquinone oxidoreductase chain 2 of Sus scrofa (Pig).